Consider the following 474-residue polypeptide: Synaptotagmin-17 (474 aa).

The disordered stretch occupies residues 60-112 (WLMASRSSDKDGDSVHTASEVPLTPRTNSPDGRRSSSDTSKSTYSLTRRISSL). Over residues 96-112 (SDTSKSTYSLTRRISSL) the composition is skewed to low complexity. Ser118 and Ser119 each carry phosphoserine. C2 domains lie at 184 to 310 (QLGM…HWWK) and 321 to 455 (ELGE…EQWH).

The protein belongs to the synaptotagmin family. Expressed abundantly in brain (frontal and temporal lobes, hippocampus, hypothalamus, amygdala, substantia nigra, and pituitary), kidney, and prostate. Expressed in fetal brain, kidney and lung. Expressed in melanocytes.

The protein resides in the membrane. Its function is as follows. Plays a role in dendrite formation by melanocytes. This chain is Synaptotagmin-17 (SYT17), found in Homo sapiens (Human).